The primary structure comprises 141 residues: Hemoglobin subunit alpha-D (141 aa).

The Globin domain occupies 1–141 (MLTADDKKLI…VAAVLAEKYR (141 aa)). Heme b is bound by residues His-58 and His-87.

This sequence belongs to the globin family. In terms of assembly, heterotetramer of two alpha-D chains and two beta chains. In terms of tissue distribution, red blood cells.

Functionally, involved in oxygen transport from the lung to the various peripheral tissues. In Struthio camelus (Common ostrich), this protein is Hemoglobin subunit alpha-D (HBAD).